Reading from the N-terminus, the 798-residue chain is PR domain zinc finger protein 4 (798 aa).

The SET domain maps to 408–525 (KQLVLRQSIV…PENELLFYYS (118 aa)). 5 C2H2-type zinc fingers span residues 586-608 (WKCS…FMGH), 614-636 (HKCD…LKIH), 642-664 (YRCT…MVIH), 670-692 (LKCD…VLIH), and 698-720 (IKCP…LNSH). Residues 726–747 (YVCEKCTKAYLTKYHLTRHLKA) form a C2H2-type 6; degenerate zinc finger. Positions 750–798 (EPASSSSAQDDEDEDGDSGEDGLPGSMTTEGCRMSSAVYSADESLSAHK) are disordered. Over residues 758-769 (QDDEDEDGDSGE) the composition is skewed to acidic residues.

The protein belongs to the class V-like SAM-binding methyltransferase superfamily.

The protein resides in the nucleus. Functionally, may function as a transcription factor involved in cell differentiation. This chain is PR domain zinc finger protein 4 (Prdm4), found in Rattus norvegicus (Rat).